Here is a 78-residue protein sequence, read N- to C-terminus: Small ribosomal subunit protein bS16c (78 aa).

Belongs to the bacterial ribosomal protein bS16 family.

The protein resides in the plastid. It is found in the chloroplast. The sequence is that of Small ribosomal subunit protein bS16c from Gracilaria tenuistipitata var. liui (Red alga).